The primary structure comprises 297 residues: Coatomer subunit epsilon-2 (297 aa).

It belongs to the COPE family. In terms of assembly, oligomeric complex that consists of at least the alpha, beta, beta', gamma, delta, epsilon and zeta subunits.

The protein resides in the cytoplasm. It is found in the golgi apparatus membrane. Its subcellular location is the cytoplasmic vesicle. It localises to the COPI-coated vesicle membrane. Its function is as follows. The coatomer is a cytosolic protein complex that binds to dilysine motifs and reversibly associates with Golgi non-clathrin-coated vesicles, which further mediate biosynthetic protein transport from the ER, via the Golgi up to the trans Golgi network. The coatomer complex is required for budding from Golgi membranes, and is essential for the retrograde Golgi-to-ER transport of dilysine-tagged proteins. This Oryza sativa subsp. indica (Rice) protein is Coatomer subunit epsilon-2.